The primary structure comprises 624 residues: Anti-CBASS protein Acb1 (624 aa).

Residue Tyr106 coordinates 3',3'-cGAMP. 3',3'-cUAMP is bound at residue Tyr106. Active-site residues include His503, Thr505, His581, and Thr583. Trp617 contacts 3',3'-cGAMP. Trp617 is a 3',3'-cUAMP binding site.

The protein belongs to the anti-CBASS protein Acb1 family.

The enzyme catalyses 3',3'-cUAMP + H2O = U[3'-5']pAp[3'] + H(+). The catalysed reaction is 3',3',3'-c-tri-AMP + H2O = A[3'-5']pA[3'-5']pAp[3'] + H(+). It carries out the reaction 3',3',3'-cAAG + H2O = G[3'-5']pA[3'-5']pAp[3'] + H(+). It catalyses the reaction 3',3',3'-cAAG + H2O = A[3'-5']pG[3'-5']pAp[3'] + H(+). The enzyme catalyses 3',3'-cGAMP + H2O = G[3'-5']pAp[3'] + H(+). In terms of biological role, counteracts or regulates the endogenous CBASS antiviral defense system. Phosphodiesterase that enables metal-independent hydrolysis of the host cyclic di- and trinucleotide CBASS signals such as 3'3'-cGAMP, 3'3'cUA, and 3'3'3'-cAAA. The protein is Anti-CBASS protein Acb1 of Sphingomonas paeninsulae.